The primary structure comprises 292 residues: MGKPRQNPSTLVSTLCEAEPKGKLWVNGYAGTQGTRDATLQTRLIPLSFHLQRGKGLAAPLSALSAPRLPERPADGRVAVDAQPAARSMDSDSGEQSEGEPVTAAGPDVFSSKSLALQAQKKILSKIASKTVANMLIDDTSSEIFDELYKVTKEHTHNKKEAHKIMKDLIKVAIKIGILYRNNQFSQEELVIVEKFRKKLNQTAMTIVSFYEVEYTFDRNVLSNLLHECKDLVHELVQRHLTPRTHGRINHVFNHFADVEFLSTLYSLDGDCRPNLKRICEGINKLLDEKVL.

The segment at 81 to 107 (DAQPAARSMDSDSGEQSEGEPVTAAGP) is disordered. The segment at 109–292 (VFSSKSLALQ…INKLLDEKVL (184 aa)) is binding to phosphoinositides.

The protein belongs to the TNFAIP8 family. As to expression, widely expressed (at protein level). Highly expressed in most carcinoma cell lines.

The protein resides in the cytoplasm. It localises to the cell membrane. Its function is as follows. Acts as a lipid transfer protein. Preferentially captures and shuttles two lipid second messengers, i.e., phosphatidylinositol 4,5- bisphosphate and phosphatidylinositol 3,4,5-trisphosphate and increases their levels in the plasma membrane. Additionally, may also function as a lipid-presenting protein to enhance the activity of the PI3K-AKT and MEK-ERK pathways. May act as a regulator of tumorigenesis through its activation of phospholipid signaling. This chain is Tumor necrosis factor alpha-induced protein 8-like protein 3 (TNFAIP8L3), found in Homo sapiens (Human).